Consider the following 675-residue polypeptide: Regulator of G-protein signaling 9 (675 aa).

A DEP domain is found at 30–105 (PETGVRMHNQ…PDSSLYRFQT (76 aa)). The region spanning 222–283 (VRKEIMYYQQ…DTQFWDLNAK (62 aa)) is the G protein gamma domain. Residues 299–414 (NFSELIRDPK…LKSPIYKEML (116 aa)) form the RGS domain. Disordered regions lie at residues 524-571 (RVAL…PPKA) and 637-662 (DSGT…EKEV). Residues 542–551 (SGANSGPSVT) show a composition bias toward polar residues. Composition is skewed to basic and acidic residues over residues 552–562 (ENREPSADHSR) and 646–662 (DDPR…EKEV).

Heterodimer with GNB5. Interacts with RGS7BP, leading to regulate the subcellular location of the heterodimer formed with GNB5. Component of the RGS9-1-Gbeta5 complex composed of RGS9 (RGS9-1), Gbeta5 (GNB5) and RGS9BP. Interacts with PDE6G and GNAT1. Post-translationally, retinal isoform 1 is light-dependent phosphorylated at 'Ser-475'. Phosphorylation is decreased by light exposition. Interaction with RGS9BP is decreased when isoform 1 is phosphorylated at 'Ser-475'. As to expression, isoform 1 is expressed in photoreceptor outer segments. Isoform 2 is expressed in brain striatum.

It localises to the membrane. Functionally, inhibits signal transduction by increasing the GTPase activity of G protein alpha subunits thereby driving them into their inactive GDP-bound form. Binds to GNAT1. Involved in phototransduction; key element in the recovery phase of visual transduction. This chain is Regulator of G-protein signaling 9 (Rgs9), found in Mus musculus (Mouse).